The primary structure comprises 434 residues: Glutamyl-tRNA reductase (434 aa).

Residues 49-52, serine 114, 119-121, and glutamine 125 each bind substrate; these read TCNR and EPQ. Catalysis depends on cysteine 50, which acts as the Nucleophile. NADP(+) is bound at residue 199–204; sequence GAGETI.

Belongs to the glutamyl-tRNA reductase family. Homodimer.

It carries out the reaction (S)-4-amino-5-oxopentanoate + tRNA(Glu) + NADP(+) = L-glutamyl-tRNA(Glu) + NADPH + H(+). The protein operates within porphyrin-containing compound metabolism; protoporphyrin-IX biosynthesis; 5-aminolevulinate from L-glutamyl-tRNA(Glu): step 1/2. Its function is as follows. Catalyzes the NADPH-dependent reduction of glutamyl-tRNA(Glu) to glutamate 1-semialdehyde (GSA). The chain is Glutamyl-tRNA reductase from Pasteurella multocida (strain Pm70).